Here is a 95-residue protein sequence, read N- to C-terminus: Acylphosphatase (95 aa).

The 88-residue stretch at 8–95 (RVSARITGRV…DAFEGFRVRR (88 aa)) folds into the Acylphosphatase-like domain. Catalysis depends on residues Arg-23 and Asn-41.

Belongs to the acylphosphatase family.

The catalysed reaction is an acyl phosphate + H2O = a carboxylate + phosphate + H(+). The protein is Acylphosphatase (acyP) of Salinibacter ruber (strain DSM 13855 / M31).